Reading from the N-terminus, the 300-residue chain is ESX-5 secretion-associated protein EspG5 (300 aa).

Belongs to the EspG family. As to quaternary structure, interacts specifically with ESX-5-dependent PE/PPE proteins. Binds PPE33 and PPE18. Does not interact with EsxN. Monomer in solution.

It is found in the cytoplasm. Its function is as follows. Specific chaperone for cognate PE/PPE proteins. Plays an important role in preventing aggregation of PE/PPE dimers. Required for LipY and PE31/PPE18 secretion. The sequence is that of ESX-5 secretion-associated protein EspG5 from Mycobacterium marinum (strain ATCC BAA-535 / M).